A 1216-amino-acid chain; its full sequence is RAB11-binding protein RELCH (1216 aa).

Gly residues predominate over residues 1–13 (MAAMAPGGGGSGS). Disordered regions lie at residues 1-67 (MAAM…GSSA) and 133-179 (NPGN…NRAG). Ala-2 carries the post-translational modification N-acetylalanine. Phosphoserine is present on residues Ser-20 and Ser-22. The span at 21–31 (DSDEDDDEVAA) shows a compositional bias: acidic residues. Thr-32 carries the phosphothreonine modification. A phosphoserine mark is found at Ser-54 and Ser-56. Low complexity predominate over residues 142–154 (GTPPGMGAPGIPG). Residues Ser-180 and Ser-182 each carry the phosphoserine modification. Thr-183 bears the Phosphothreonine mark. A Phosphoserine modification is found at Ser-186. Positions 197–231 (NRETDERVAVLEFELRKAKETIQALRANLTKAAEH) form a coiled coil. In terms of domain architecture, LisH spans 255 to 287 (EKRALNFLVNEFLLKNNYKLTSITFSDENDDQD). The stretch at 358 to 397 (LVQKLEDKISLLNNEKWSLMEQIRRLESEMDILKAEHFAT) forms a coiled coil. At Ser-385 the chain carries Phosphoserine. The segment at 409–473 (VWSSQKDSED…ELPPSSVSNK (65 aa)) is disordered. Basic and acidic residues predominate over residues 429 to 440 (DQEKTKDVHLEI). Phosphoserine is present on Ser-453. Positions 497–779 (CRMSADSRLG…SSKAKLHGEV (283 aa)) are interaction with RAB11A and RAB11B. HEAT repeat units follow at residues 601–639 (LLPQ…RSSL) and 640–679 (VLSM…KYQQ). Ser-792 is modified (phosphoserine). One copy of the HEAT 3 repeat lies at 1004–1042 (VVPALITLSSDPEISVRIATIPAFGTIMETVIQRELLER). Ser-1149 carries the phosphoserine modification.

Interacts with RAB11A (VIA-GTP form). Interacts with RAB11B. Interacts (via the third HEAT repeat) with OSBP (via C-terminus). Found in a complex composed of RELCH, OSBP1 and RAB11A.

The protein resides in the recycling endosome. It localises to the golgi apparatus. The protein localises to the trans-Golgi network. Functionally, regulates intracellular cholesterol distribution from recycling endosomes to the trans-Golgi network through interactions with RAB11 and OSBP. Functions in membrane tethering and promotes OSBP-mediated cholesterol transfer between RAB11-bound recycling endosomes and OSBP-bound Golgi-like membranes. The protein is RAB11-binding protein RELCH (Relch) of Mus musculus (Mouse).